The sequence spans 431 residues: MSVIQDLQSRDLIAQTTDIEALDALLNEQKIALYCGFDPTADSLHIGHLLPVLALRRFQQAGHTPIALVGGATGMIGDPSFKAAERSLNSAETVAGWVESIRNQLTPFLSFEGGNAAIMANNADWFGKMNCLDFLRDIGKHFSVNAMLNKESVKQRIDRDGAGISFTEFAYSLLQGYDFAELNKRYGAVLEIGGSDQWGNITAGIDLTRRLNQKQVFGLTLPLVTKSDGTKFGKTEGGAVWLNAKKTSPYQFYQFWLKVADADVYKFLKYFTFLSIEEIDAVEAKDQASGSKPEAQRILAEEMTRLIHGEEALAAAQRISESLFAEDQSSLTESDFEQLALDGLPAFEVSDGINVVEALVKTGLASSNKEARGFVNSKAVLLNGKPAEANNPNHAAERPDDACLLTDEHKRFGKYTILRRGKRNHALLVWK.

Y34 is an L-tyrosine binding site. Residues 39 to 48 (PTADSLHIGH) carry the 'HIGH' region motif. L-tyrosine contacts are provided by Y171 and Q175. Positions 231 to 235 (KFGKT) match the 'KMSKS' region motif. K234 serves as a coordination point for ATP. The S4 RNA-binding domain maps to 353–422 (INVVEALVKT…GKYTILRRGK (70 aa)).

It belongs to the class-I aminoacyl-tRNA synthetase family. TyrS type 1 subfamily. As to quaternary structure, homodimer.

The protein resides in the cytoplasm. The catalysed reaction is tRNA(Tyr) + L-tyrosine + ATP = L-tyrosyl-tRNA(Tyr) + AMP + diphosphate + H(+). Catalyzes the attachment of tyrosine to tRNA(Tyr) in a two-step reaction: tyrosine is first activated by ATP to form Tyr-AMP and then transferred to the acceptor end of tRNA(Tyr). The chain is Tyrosine--tRNA ligase from Neisseria meningitidis serogroup C (strain 053442).